A 783-amino-acid polypeptide reads, in one-letter code: Type 4 coupling protein DotL (783 aa).

The chain crosses the membrane as a helical span at residues 47 to 67; the sequence is VSYYFSEAATFLLIMGGIFFL. The ATPase domain stretch occupies residues 100–500; that stretch reads NIARGITFFG…ICMKLEDPTE (401 aa). The interaction with IcmS/IcmW stretch occupies residues 671–773; it reads VEGALTIFSK…SAKISAEREK (103 aa).

In terms of assembly, the T4BSS is a complex nanomachine composed of several subcomplexes. This subunit is part of the Type IV Coupling Complex (T4CC), a subcomplex composed of the DotLMNYZ core and the IcmSW-LvgA adapter subunits, linked by the C-terminal tail of DotL. Six DotLMNYZ hetero-pentameric units may assemble into a hexameric nanomachine, forming an inner membrane channel for effectors to pass through. Interacts directly with DotM. Interacts directly, via its C-terminal region, with the type IV adapter proteins IcmS and IcmW. Also interacts with DotN and LvgA via its C-terminal region.

Its subcellular location is the cell inner membrane. Its function is as follows. Component of the Dot/Icm type IVB secretion system (T4BSS), which is used to inject bacterial effector proteins into eukaryotic host cells. Part of a subcomplex which recruits effector proteins and delivers them to the core transmembrane subcomplex. Plays a central role in the assembly of the subcomplex. Required for the recruitment of IcmS and IcmW to the inner membrane and for the translocation of adapter-dependent substrates. May have ATPase activity. The chain is Type 4 coupling protein DotL from Legionella pneumophila subsp. pneumophila (strain Philadelphia 1 / ATCC 33152 / DSM 7513).